The chain runs to 336 residues: Peroxidase 11 (336 aa).

Positions Met1 to Ser20 are cleaved as a signal peptide. 4 cysteine pairs are disulfide-bonded: Cys39-Cys119, Cys72-Cys77, Cys125-Cys331, and Cys204-Cys236. Catalysis depends on His70, which acts as the Proton acceptor. 5 residues coordinate Ca(2+): Asp71, Val74, Gly76, Asp78, and Ser80. Pro167 is a binding site for substrate. Position 197 (His197) interacts with heme b. Ca(2+) is bound at residue Thr198. Asn246 carries N-linked (GlcNAc...) asparagine glycosylation. Residues Asp251, Thr254, and Asp259 each coordinate Ca(2+).

Belongs to the peroxidase family. Classical plant (class III) peroxidase subfamily. Heme b serves as cofactor. Ca(2+) is required as a cofactor. In terms of tissue distribution, expressed in roots and stems.

The protein resides in the secreted. The catalysed reaction is 2 a phenolic donor + H2O2 = 2 a phenolic radical donor + 2 H2O. Removal of H(2)O(2), oxidation of toxic reductants, biosynthesis and degradation of lignin, suberization, auxin catabolism, response to environmental stresses such as wounding, pathogen attack and oxidative stress. These functions might be dependent on each isozyme/isoform in each plant tissue. This chain is Peroxidase 11 (PER11), found in Arabidopsis thaliana (Mouse-ear cress).